A 552-amino-acid chain; its full sequence is NADH-ubiquinone oxidoreductase chain 5 (552 aa).

Transmembrane regions (helical) follow at residues 11 to 31 (PVTIHLGTWISLGDIVIPFGL), 36 to 56 (LAMTVIVPVGIITLCVLAYAI), 68 to 88 (FYIILSIFAVFMTILVVSDNY), 89 to 109 (LMMFIGWEFVGVISYLLISFW), 121 to 141 (SAILLNRMGDTFFVIALGLMI), 152 to 172 (IALVTPYMNTFLLNTLGLLLL), 196 to 216 (TPVSALLHAATMVCAGVYVLV), 229 to 249 (LLIICWLGGLTTLVSGLIAIV), 256 to 274 (VIALSTMSQLSIMVLAIGI), 287 to 307 (HAFFKALLFMGAGSVIHSFVA), 322 to 342 (LPFSYTAILIASLSLMAIPGL), 365 to 386 (ILYYIAVGSATLTSIYSLRVLY), 406 to 426 (SLGMMIPMIVLVIYSIFIGYS), 453 to 473 (AYIKLLPLILGLTLSAILVYV), and 532 to 552 (SRAVTYINVIVIINILYLFFI).

The protein belongs to the complex I subunit 5 family.

It localises to the mitochondrion inner membrane. It catalyses the reaction a ubiquinone + NADH + 5 H(+)(in) = a ubiquinol + NAD(+) + 4 H(+)(out). In terms of biological role, core subunit of the mitochondrial membrane respiratory chain NADH dehydrogenase (Complex I) that is believed to belong to the minimal assembly required for catalysis. Complex I functions in the transfer of electrons from NADH to the respiratory chain. The immediate electron acceptor for the enzyme is believed to be ubiquinone. In Candida albicans (strain SC5314 / ATCC MYA-2876) (Yeast), this protein is NADH-ubiquinone oxidoreductase chain 5 (NAD5).